Here is a 300-residue protein sequence, read N- to C-terminus: Probable amino-acid ABC transporter periplasmic-binding protein y4tE (300 aa).

Positions 1–27 (MTHLKISKTAPAVARFLPAGRIASVAA) are cleaved as a signal peptide.

It belongs to the bacterial solute-binding protein 3 family.

It localises to the periplasm. Probably part of the binding-protein-dependent transport system y4tEFGH for an amino acid. The polypeptide is Probable amino-acid ABC transporter periplasmic-binding protein y4tE (Sinorhizobium fredii (strain NBRC 101917 / NGR234)).